The following is a 166-amino-acid chain: Large ribosomal subunit protein uL10 (166 aa).

Belongs to the universal ribosomal protein uL10 family. As to quaternary structure, part of the ribosomal stalk of the 50S ribosomal subunit. The N-terminus interacts with L11 and the large rRNA to form the base of the stalk. The C-terminus forms an elongated spine to which L12 dimers bind in a sequential fashion forming a multimeric L10(L12)X complex.

Forms part of the ribosomal stalk, playing a central role in the interaction of the ribosome with GTP-bound translation factors. This chain is Large ribosomal subunit protein uL10, found in Ectopseudomonas mendocina (strain ymp) (Pseudomonas mendocina).